Consider the following 79-residue polypeptide: Putative membrane protein insertion efficiency factor (79 aa).

Belongs to the UPF0161 family.

Its subcellular location is the cell inner membrane. In terms of biological role, could be involved in insertion of integral membrane proteins into the membrane. The sequence is that of Putative membrane protein insertion efficiency factor from Rippkaea orientalis (strain PCC 8801 / RF-1) (Cyanothece sp. (strain PCC 8801)).